The sequence spans 147 residues: Hemoglobin subunit beta-1 (147 aa).

Val2 is modified (N-acetylvaline). A Globin domain is found at 3–147; that stretch reads HLTDAEKAAV…VATALAHKYH (145 aa). Lys18 carries the post-translational modification N6-succinyllysine. A phosphoserine mark is found at Ser21, Ser45, and Ser51. Lys60 carries the N6-succinyllysine modification. Heme b is bound by residues His64 and His93. The residue at position 105 (Arg105) is an Asymmetric dimethylarginine. At Thr124 the chain carries Phosphothreonine.

It belongs to the globin family. In terms of assembly, heterotetramer of two alpha chains and two beta chains. As to expression, red blood cells.

Functionally, involved in oxygen transport from the lung to the various peripheral tissues. This is Hemoglobin subunit beta-1 (Hbb-b1) from Mus musculus (Mouse).